The primary structure comprises 258 residues: tRNA pseudouridine synthase A (258 aa).

Aspartate 55 acts as the Nucleophile in catalysis. Tyrosine 113 provides a ligand contact to substrate.

Belongs to the tRNA pseudouridine synthase TruA family. As to quaternary structure, homodimer.

The enzyme catalyses uridine(38/39/40) in tRNA = pseudouridine(38/39/40) in tRNA. In terms of biological role, formation of pseudouridine at positions 38, 39 and 40 in the anticodon stem and loop of transfer RNAs. The polypeptide is tRNA pseudouridine synthase A (Limosilactobacillus fermentum (strain NBRC 3956 / LMG 18251) (Lactobacillus fermentum)).